The primary structure comprises 149 residues: Transcriptional repressor NrdR (149 aa).

A zinc finger spans residues 3–34 (CPYCSYEESKVVDSRSAEDYNAIRRRRECLRC). Residues 49 to 139 (ILVIKKDLSR…VYRQFKDINT (91 aa)) enclose the ATP-cone domain.

This sequence belongs to the NrdR family. Requires Zn(2+) as cofactor.

Negatively regulates transcription of bacterial ribonucleotide reductase nrd genes and operons by binding to NrdR-boxes. In Clostridium perfringens (strain ATCC 13124 / DSM 756 / JCM 1290 / NCIMB 6125 / NCTC 8237 / Type A), this protein is Transcriptional repressor NrdR.